The following is a 541-amino-acid chain: Protein VAPYRIN (541 aa).

The 135-residue stretch at 4-138 (LIKLDPSNIV…IDSAIKVMFV (135 aa)) folds into the MSP domain. ANK repeat units follow at residues 176 to 205 (QGQT…DIEA), 209 to 238 (VGST…NTEG), 242 to 271 (SVFR…RVDS), 275 to 304 (DGNT…RTDV), 309 to 338 (EGDT…TKYV), 342 to 372 (LGKT…CAAA), 374 to 392 (KGEV…VING), 396 to 425 (NGWT…DLDA), 429 to 458 (DGYT…DVEA), and 462 to 491 (KGVS…SREG).

As to quaternary structure, interacts with EX70I at the periarbuscular membrane (PAM) around the arbuscule hyphal tips. In terms of tissue distribution, expressed in roots.

The protein localises to the cytoplasm. The protein resides in the nucleus. Its subcellular location is the cell membrane. In terms of biological role, required for arbuscular mycorrhizal (AM) symbiosis with AM fungi (e.g. Glomus versiforme and Gigaspora gigantea) both during fungal passage across root epidermis and for arbuscule formation in cortical cells; this symbiosis promotes phosphorus (P) and copper (Cu) uptake. Essential for infection by symbiotic nitrogen-fixing rhizobial bacteria (e.g. Sinorhizobium meliloti) leading to the formation of root nodules. This is Protein VAPYRIN from Medicago truncatula (Barrel medic).